Reading from the N-terminus, the 210-residue chain is Pyridoxine/pyridoxamine 5'-phosphate oxidase (210 aa).

Substrate contacts are provided by residues 7–10 (REDY) and Lys65. Residues 60-65 (RMVLLK), 75-76 (FT), Arg81, Lys82, and Gln104 each bind FMN. Residues Tyr122, Arg126, and Ser130 each coordinate substrate. FMN is bound by residues 139-140 (QS) and Trp183. Residue 189-191 (RLH) coordinates substrate. Position 193 (Arg193) interacts with FMN.

The protein belongs to the pyridoxamine 5'-phosphate oxidase family. As to quaternary structure, homodimer. FMN serves as cofactor.

The catalysed reaction is pyridoxamine 5'-phosphate + O2 + H2O = pyridoxal 5'-phosphate + H2O2 + NH4(+). The enzyme catalyses pyridoxine 5'-phosphate + O2 = pyridoxal 5'-phosphate + H2O2. It functions in the pathway cofactor metabolism; pyridoxal 5'-phosphate salvage; pyridoxal 5'-phosphate from pyridoxamine 5'-phosphate: step 1/1. Its pathway is cofactor metabolism; pyridoxal 5'-phosphate salvage; pyridoxal 5'-phosphate from pyridoxine 5'-phosphate: step 1/1. Its function is as follows. Catalyzes the oxidation of either pyridoxine 5'-phosphate (PNP) or pyridoxamine 5'-phosphate (PMP) into pyridoxal 5'-phosphate (PLP). The chain is Pyridoxine/pyridoxamine 5'-phosphate oxidase from Neisseria gonorrhoeae (strain ATCC 700825 / FA 1090).